A 260-amino-acid chain; its full sequence is Snake venom serine protease pallabin (260 aa).

The first 18 residues, 1 to 18 (MVLIRVLANLLILQLSYA), serve as a signal peptide directing secretion. Residues 19-24 (QKSSKL) constitute a propeptide that is removed on maturation. Residues 25-251 (VIGGDECNIN…HLDWIENIIA (227 aa)) form the Peptidase S1 domain. Intrachain disulfides connect Cys31–Cys163, Cys50–Cys66, Cys98–Cys258, Cys142–Cys212, Cys174–Cys191, and Cys202–Cys227. His65 serves as the catalytic Charge relay system. N-linked (GlcNAc...) asparagine glycosylation occurs at Asn103. The active-site Charge relay system is the Asp110. Residue Ser206 is the Charge relay system of the active site.

Belongs to the peptidase S1 family. Snake venom subfamily. Monomer. In terms of tissue distribution, expressed by the venom gland.

The protein localises to the secreted. In terms of biological role, snake venom serine protease that may act in the hemostasis system of the prey. This is Snake venom serine protease pallabin (JZTHR5) from Gloydius halys (Chinese water mocassin).